Consider the following 331-residue polypeptide: Homoserine kinase (331 aa).

Belongs to the pseudomonas-type ThrB family.

It catalyses the reaction L-homoserine + ATP = O-phospho-L-homoserine + ADP + H(+). It participates in amino-acid biosynthesis; L-threonine biosynthesis; L-threonine from L-aspartate: step 4/5. In Cupriavidus necator (strain ATCC 17699 / DSM 428 / KCTC 22496 / NCIMB 10442 / H16 / Stanier 337) (Ralstonia eutropha), this protein is Homoserine kinase.